The chain runs to 473 residues: Photosystem II CP43 reaction center protein (473 aa).

Residues 1–14 constitute a propeptide that is removed on maturation; the sequence is MKILYSQRRFYPVE. The residue at position 15 (T15) is an N-acetylthreonine. T15 carries the post-translational modification Phosphothreonine. 5 helical membrane-spanning segments follow: residues 69–93, 134–155, 178–200, 255–275, and 291–312; these read LFEVAHFVPEKPMYEQGLILLPHLA, LIGPETLEESFPFFGYVWKDKN, KALYFGGIYDTWAPGGGDVRKIT, KPFAWARRALVWSGEAYLSYS, and WFNNTAYPSEFYGPTGPEASQA. E367 provides a ligand contact to [CaMn4O5] cluster. The chain crosses the membrane as a helical span at residues 447–471; sequence RARAAAAGFEKGIDRDFEPVLSMTP.

It belongs to the PsbB/PsbC family. PsbC subfamily. In terms of assembly, PSII is composed of 1 copy each of membrane proteins PsbA, PsbB, PsbC, PsbD, PsbE, PsbF, PsbH, PsbI, PsbJ, PsbK, PsbL, PsbM, PsbT, PsbX, PsbY, PsbZ, Psb30/Ycf12, at least 3 peripheral proteins of the oxygen-evolving complex and a large number of cofactors. It forms dimeric complexes. Binds multiple chlorophylls and provides some of the ligands for the Ca-4Mn-5O cluster of the oxygen-evolving complex. It may also provide a ligand for a Cl- that is required for oxygen evolution. PSII binds additional chlorophylls, carotenoids and specific lipids. serves as cofactor. Phosphorylated on threonine residue(s).

It localises to the plastid. Its subcellular location is the chloroplast thylakoid membrane. In terms of biological role, one of the components of the core complex of photosystem II (PSII). It binds chlorophyll and helps catalyze the primary light-induced photochemical processes of PSII. PSII is a light-driven water:plastoquinone oxidoreductase, using light energy to abstract electrons from H(2)O, generating O(2) and a proton gradient subsequently used for ATP formation. The protein is Photosystem II CP43 reaction center protein of Marchantia polymorpha (Common liverwort).